A 333-amino-acid polypeptide reads, in one-letter code: Ketol-acid reductoisomerase (NADP(+)) (333 aa).

Residues 1 to 179 (MFYDDDADLS…GGTRAGVIKT (179 aa)) enclose the KARI N-terminal Rossmann domain. Residues 22-25 (YGSQ), Lys45, Ser48, Ser50, and 80-83 (DTAQ) contribute to the NADP(+) site. The active site involves His105. Gly131 contacts NADP(+). The 146-residue stretch at 180 to 325 (TFKDETETDL…KKLRDLMSWV (146 aa)) folds into the KARI C-terminal knotted domain. 4 residues coordinate Mg(2+): Asp188, Glu192, Glu224, and Glu228. Residue Ser249 participates in substrate binding.

This sequence belongs to the ketol-acid reductoisomerase family. Requires Mg(2+) as cofactor.

It catalyses the reaction (2R)-2,3-dihydroxy-3-methylbutanoate + NADP(+) = (2S)-2-acetolactate + NADPH + H(+). The catalysed reaction is (2R,3R)-2,3-dihydroxy-3-methylpentanoate + NADP(+) = (S)-2-ethyl-2-hydroxy-3-oxobutanoate + NADPH + H(+). It functions in the pathway amino-acid biosynthesis; L-isoleucine biosynthesis; L-isoleucine from 2-oxobutanoate: step 2/4. Its pathway is amino-acid biosynthesis; L-valine biosynthesis; L-valine from pyruvate: step 2/4. Involved in the biosynthesis of branched-chain amino acids (BCAA). Catalyzes an alkyl-migration followed by a ketol-acid reduction of (S)-2-acetolactate (S2AL) to yield (R)-2,3-dihydroxy-isovalerate. In the isomerase reaction, S2AL is rearranged via a Mg-dependent methyl migration to produce 3-hydroxy-3-methyl-2-ketobutyrate (HMKB). In the reductase reaction, this 2-ketoacid undergoes a metal-dependent reduction by NADPH to yield (R)-2,3-dihydroxy-isovalerate. The sequence is that of Ketol-acid reductoisomerase (NADP(+)) from Mycobacterium bovis (strain ATCC BAA-935 / AF2122/97).